Here is a 377-residue protein sequence, read N- to C-terminus: Peroxisomal membrane protein PEX14 (377 aa).

The segment covering 1-15 has biased composition (low complexity); the sequence is MASSEQAEQPSQPSS. The interval 1-24 is disordered; the sequence is MASSEQAEQPSQPSSTPGSENVLP. N-acetylalanine is present on Ala-2. At 2–108 the chain is on the peroxisomal matrix side; it reads ASSEQAEQPS…YSPAGSRWRD (107 aa). Lys-34 carries the N6-acetyllysine modification. The chain crosses the membrane as a helical span at residues 109–126; that stretch reads YGALAIIMAGIAFGFHQL. The Cytoplasmic portion of the chain corresponds to 127–377; that stretch reads YKKYLLPLIL…EGASNESERD (251 aa). Positions 230–377 are disordered; sequence PPSPSAPKIP…EGASNESERD (148 aa). The residue at position 232 (Ser-232) is a Phosphoserine. Composition is skewed to low complexity over residues 244–259 and 265–275; these read PVKS…VNHH and SPVSNESTSSS. A phosphoserine mark is found at Ser-282 and Ser-335. Residues 323 to 342 are compositionally biased toward acidic residues; that stretch reads KEDEEDEEDDDVSHVDEEDC. Residues 360 to 377 show a composition bias toward basic and acidic residues; the sequence is QVEKLRRPEGASNESERD.

The protein belongs to the peroxin-14 family. As to quaternary structure, interacts with PEX13; forming the PEX13-PEX14 docking complex. Interacts with PEX5 (via WxxxF/Y motifs). Interacts with PEX19. Interacts with tubulin.

Its subcellular location is the peroxisome membrane. Functionally, component of the PEX13-PEX14 docking complex, a translocon channel that specifically mediates the import of peroxisomal cargo proteins bound to PEX5 receptor. The PEX13-PEX14 docking complex forms a large import pore which can be opened to a diameter of about 9 nm. Mechanistically, PEX5 receptor along with cargo proteins associates with the PEX14 subunit of the PEX13-PEX14 docking complex in the cytosol, leading to the insertion of the receptor into the organelle membrane with the concomitant translocation of the cargo into the peroxisome matrix. Plays a key role for peroxisome movement through a direct interaction with tubulin. The polypeptide is Peroxisomal membrane protein PEX14 (Homo sapiens (Human)).